The primary structure comprises 86 residues: Small ribosomal subunit protein uS17 (86 aa).

The protein belongs to the universal ribosomal protein uS17 family. Part of the 30S ribosomal subunit.

Its function is as follows. One of the primary rRNA binding proteins, it binds specifically to the 5'-end of 16S ribosomal RNA. In Roseiflexus castenholzii (strain DSM 13941 / HLO8), this protein is Small ribosomal subunit protein uS17.